The chain runs to 238 residues: 7-cyano-7-deazaguanine synthase (238 aa).

ATP is bound at residue 12–22 (FSGGQDSGTCL). Zn(2+)-binding residues include Cys200, Cys215, Cys218, and Cys221.

This sequence belongs to the QueC family. Zn(2+) serves as cofactor.

It carries out the reaction 7-carboxy-7-deazaguanine + NH4(+) + ATP = 7-cyano-7-deazaguanine + ADP + phosphate + H2O + H(+). It functions in the pathway purine metabolism; 7-cyano-7-deazaguanine biosynthesis. Its function is as follows. Catalyzes the ATP-dependent conversion of 7-carboxy-7-deazaguanine (CDG) to 7-cyano-7-deazaguanine (preQ(0)). The polypeptide is 7-cyano-7-deazaguanine synthase (Lawsonia intracellularis (strain PHE/MN1-00)).